Reading from the N-terminus, the 663-residue chain is uncharacterized protein (663 aa).

A signal peptide spans 1 to 29 (MLDIGVIGRLKFATAFMAMSLLLVPAAEA).

This sequence belongs to the bacterial solute-binding protein 5 family.

The protein localises to the periplasm. In terms of biological role, possible binding-protein with either a transport or enzymatic activity. This is an uncharacterized protein from Sinorhizobium fredii (strain NBRC 101917 / NGR234).